Reading from the N-terminus, the 285-residue chain is MKINVSRPLQFLQWSSYIVVAFLIQLLIILPLSILIYHDFYLRLLPADSSNVVPLNTFNILNGVQFGTKFFQSIKSIPVGTDLPQTIDNGLSQLIPMRDNMEYKLDLNLQLYCQSKTDHLNLDNLLIDVYRGPGPLLGAPGGSNSKDEKIFHTSRPIVCLALTDSMSPQEIEQLGPSRLDVYDEEWLNTIRIEDKISLESSYETISVFLKTEIAQRNLIIHPESGIKFRMNFEQGLRNLMLRKRFLSYIIGISIFHCIICVLFFITGCTAFIFVRKGQEKSKKHS.

The Cytoplasmic portion of the chain corresponds to 1–16; it reads MKINVSRPLQFLQWSS. The helical transmembrane segment at 17–37 threads the bilayer; that stretch reads YIVVAFLIQLLIILPLSILIY. The Lumenal segment spans residues 38 to 244; that stretch reads HDFYLRLLPA…GLRNLMLRKR (207 aa). A helical transmembrane segment spans residues 245–265; that stretch reads FLSYIIGISIFHCIICVLFFI. The Cytoplasmic segment spans residues 266–285; sequence TGCTAFIFVRKGQEKSKKHS.

The protein belongs to the seipin family.

It is found in the endoplasmic reticulum membrane. Functionally, involved in lipid metabolism and lipid droplet (LD) morphology, number, and size. Facilitates initiation of LD formation, and ensures that vectorial budding of LDs from the ER is directed towards the cytoplasm. This chain is Seipin, found in Saccharomyces cerevisiae (strain ATCC 204508 / S288c) (Baker's yeast).